We begin with the raw amino-acid sequence, 963 residues long: Importin-13 (963 aa).

20 HEAT repeats span residues 24–54 (ENVE…QAQA), 56–88 (PQAW…KISR), 95–135 (TDQY…LSMM), 142–179 (AVAD…EFQT), 194–231 (LAVE…SWVQ), 236–268 (LQDC…NAIS), 276–325 (VNTL…ALLD), 330–372 (WQSF…DDIL), 375–438 (EAEK…YEML), 440–476 (AELL…FQSI), 487–522 (VVPG…WLAD), 524–558 (PVMI…CREC), 562–600 (LPPY…LLSA), 603–648 (VEEI…SNLF), 676–716 (PVVV…VKTL), 720–754 (FAPM…VHIF), 761–803 (FPPI…ALKR), 815–845 (VKAV…TELL), 860–893 (EDGR…FALN), and 897–931 (FSLL…QQIL). One can recognise an Importin N-terminal domain in the interval 45-111 (AQKWLMQAQA…KAQLFTQITR (67 aa)).

Belongs to the importin beta family. As to quaternary structure, interacts with UBC9, RAN, RBM8A, eIF-1A and PAX6.

It is found in the cytoplasm. The protein localises to the nucleus. In terms of biological role, functions in nuclear protein import as nuclear transport receptor. Serves as receptor for nuclear localization signals (NLS) in cargo substrates. Is thought to mediate docking of the importin/substrate complex to the nuclear pore complex (NPC) through binding to nucleoporin and the complex is subsequently translocated through the pore by an energy requiring, Ran-dependent mechanism. At the nucleoplasmic side of the NPC, Ran binds to the importin, the importin/substrate complex dissociates and importin is re-exported from the nucleus to the cytoplasm where GTP hydrolysis releases Ran. The directionality of nuclear import is thought to be conferred by an asymmetric distribution of the GTP- and GDP-bound forms of Ran between the cytoplasm and nucleus. Mediates the nuclear import of UBC9, the RBM8A/MAGOH complex, PAX6 and probably other members of the paired homeobox family. Also mediates nuclear export of eIF-1A, and the cytoplasmic release of eIF-1A is triggered by the loading of import substrates onto IPO13. The protein is Importin-13 (IPO13) of Bos taurus (Bovine).